The primary structure comprises 284 residues: 2-dehydro-3-deoxyphosphooctonate aldolase (284 aa).

Belongs to the KdsA family.

Its subcellular location is the cytoplasm. It catalyses the reaction D-arabinose 5-phosphate + phosphoenolpyruvate + H2O = 3-deoxy-alpha-D-manno-2-octulosonate-8-phosphate + phosphate. It participates in carbohydrate biosynthesis; 3-deoxy-D-manno-octulosonate biosynthesis; 3-deoxy-D-manno-octulosonate from D-ribulose 5-phosphate: step 2/3. The protein operates within bacterial outer membrane biogenesis; lipopolysaccharide biosynthesis. The polypeptide is 2-dehydro-3-deoxyphosphooctonate aldolase (Pseudoalteromonas translucida (strain TAC 125)).